We begin with the raw amino-acid sequence, 168 residues long: SPbeta prophage-derived uncharacterized protein YonX (168 aa).

Residues 1-53 are a coiled coil; sequence MNAQLFNLESRLDELENEINTQYCELDTNLDALKSNRIELESQLEKFESSLTN.

This Bacillus subtilis (strain 168) protein is SPbeta prophage-derived uncharacterized protein YonX (yonX).